The following is a 475-amino-acid chain: Ribulose bisphosphate carboxylase large chain (475 aa).

The propeptide occupies 1-2; the sequence is MA. Proline 3 carries the post-translational modification N-acetylproline. Positions 123 and 173 each coordinate substrate. Lysine 175 (proton acceptor) is an active-site residue. Lysine 177 contributes to the substrate binding site. Mg(2+) contacts are provided by lysine 201, aspartate 203, and glutamate 204. Lysine 201 is subject to N6-carboxylysine. Histidine 294 serves as the catalytic Proton acceptor. Substrate-binding residues include arginine 295, histidine 327, and serine 379.

The protein belongs to the RuBisCO large chain family. Type I subfamily. Heterohexadecamer of 8 large chains and 8 small chains. It depends on Mg(2+) as a cofactor.

It localises to the plastid. It is found in the chloroplast. The enzyme catalyses 2 (2R)-3-phosphoglycerate + 2 H(+) = D-ribulose 1,5-bisphosphate + CO2 + H2O. It carries out the reaction D-ribulose 1,5-bisphosphate + O2 = 2-phosphoglycolate + (2R)-3-phosphoglycerate + 2 H(+). Its function is as follows. RuBisCO catalyzes two reactions: the carboxylation of D-ribulose 1,5-bisphosphate, the primary event in carbon dioxide fixation, as well as the oxidative fragmentation of the pentose substrate in the photorespiration process. Both reactions occur simultaneously and in competition at the same active site. This chain is Ribulose bisphosphate carboxylase large chain, found in Ostreococcus tauri.